A 726-amino-acid chain; its full sequence is Catalase-peroxidase (726 aa).

A cross-link (tryptophyl-tyrosyl-methioninium (Trp-Tyr) (with M-250)) is located at residues 96–224 (WHSAGTYRIA…LAAVMMGLIY (129 aa)). H97 serves as the catalytic Proton acceptor. The segment at residues 224–250 (YVNPEGVDGKPDPLKTAHDMRVTFARM) is a cross-link (tryptophyl-tyrosyl-methioninium (Tyr-Met) (with W-96)). H265 contributes to the heme b binding site.

Belongs to the peroxidase family. Peroxidase/catalase subfamily. In terms of assembly, homodimer or homotetramer. Heme b serves as cofactor. Formation of the three residue Trp-Tyr-Met cross-link is important for the catalase, but not the peroxidase activity of the enzyme.

The catalysed reaction is H2O2 + AH2 = A + 2 H2O. It catalyses the reaction 2 H2O2 = O2 + 2 H2O. Functionally, bifunctional enzyme with both catalase and broad-spectrum peroxidase activity. This chain is Catalase-peroxidase, found in Vibrio campbellii (strain ATCC BAA-1116).